The primary structure comprises 246 residues: MENDQDQQQQQQQSQQQQPQQEEQEQVDVDLSSLQGQERIEYINTLIADSYNIAIAKKLEEFLDIQINENTYLFQANSTLLKLYQFNPTHLNKDSIAKMLAKALMNFPCNDFLFLSYMIPSIIQKEEPLLKLFILNNFLETCKFKEAWTHINSHSFFSEIPSFIDNIRNFISGVLSITYQNISITMLGELLNLSDRTQLVDYIQSKQPTWKISDSTVSLQSDNSKQKKADTFTFDQLSRILPTFIK.

Over residues methionine 1–glutamine 21 the composition is skewed to low complexity. The tract at residues methionine 1 to aspartate 30 is disordered. In terms of domain architecture, PCI spans tyrosine 72 to aspartate 235.

It belongs to the eIF-3 subunit K family. As to quaternary structure, component of the eukaryotic translation initiation factor 3 (eIF-3) complex.

It localises to the cytoplasm. Functionally, component of the eukaryotic translation initiation factor 3 (eIF-3) complex, which is involved in protein synthesis of a specialized repertoire of mRNAs and, together with other initiation factors, stimulates binding of mRNA and methionyl-tRNAi to the 40S ribosome. The eIF-3 complex specifically targets and initiates translation of a subset of mRNAs involved in cell proliferation. The protein is Eukaryotic translation initiation factor 3 subunit K (eif3K) of Dictyostelium discoideum (Social amoeba).